A 240-amino-acid chain; its full sequence is Phosphoribosylaminoimidazole-succinocarboxamide synthase (240 aa).

This sequence belongs to the SAICAR synthetase family.

The catalysed reaction is 5-amino-1-(5-phospho-D-ribosyl)imidazole-4-carboxylate + L-aspartate + ATP = (2S)-2-[5-amino-1-(5-phospho-beta-D-ribosyl)imidazole-4-carboxamido]succinate + ADP + phosphate + 2 H(+). It functions in the pathway purine metabolism; IMP biosynthesis via de novo pathway; 5-amino-1-(5-phospho-D-ribosyl)imidazole-4-carboxamide from 5-amino-1-(5-phospho-D-ribosyl)imidazole-4-carboxylate: step 1/2. The polypeptide is Phosphoribosylaminoimidazole-succinocarboxamide synthase (Wolbachia sp. subsp. Drosophila simulans (strain wRi)).